We begin with the raw amino-acid sequence, 490 residues long: Glutamate--tRNA ligase 2 (490 aa).

The short motif at 33 to 43 (PSPTGYLHIGG) is the 'HIGH' region element. A 'KMSKS' region motif is present at residues 262–266 (KLSKR). Residue lysine 265 participates in ATP binding.

It belongs to the class-I aminoacyl-tRNA synthetase family. Glutamate--tRNA ligase type 1 subfamily. As to quaternary structure, monomer.

It localises to the cytoplasm. The enzyme catalyses tRNA(Glu) + L-glutamate + ATP = L-glutamyl-tRNA(Glu) + AMP + diphosphate. Functionally, catalyzes the attachment of glutamate to tRNA(Glu) in a two-step reaction: glutamate is first activated by ATP to form Glu-AMP and then transferred to the acceptor end of tRNA(Glu). The polypeptide is Glutamate--tRNA ligase 2 (Parvibaculum lavamentivorans (strain DS-1 / DSM 13023 / NCIMB 13966)).